A 396-amino-acid polypeptide reads, in one-letter code: Putative pyridoxal phosphate-dependent acyltransferase (396 aa).

A pyridoxal 5'-phosphate-binding site is contributed by 111-112 (GF). Histidine 136 lines the substrate pocket. Residues serine 186, 211–214 (DDAH), and 241–244 (TLSK) contribute to the pyridoxal 5'-phosphate site. An N6-(pyridoxal phosphate)lysine modification is found at lysine 244. Threonine 358 provides a ligand contact to substrate.

This sequence belongs to the class-II pyridoxal-phosphate-dependent aminotransferase family. As to quaternary structure, homodimer. Pyridoxal 5'-phosphate is required as a cofactor.

This is Putative pyridoxal phosphate-dependent acyltransferase from Bacillus anthracis.